A 364-amino-acid chain; its full sequence is tRNA 2-selenouridine synthase (364 aa).

The Rhodanese domain occupies 14-137 (LIADTPIIDV…LRQTAIQATI (124 aa)). The S-selanylcysteine intermediate role is filled by cysteine 97.

This sequence belongs to the SelU family. As to quaternary structure, monomer.

The enzyme catalyses 5-methylaminomethyl-2-thiouridine(34) in tRNA + selenophosphate + (2E)-geranyl diphosphate + H2O + H(+) = 5-methylaminomethyl-2-selenouridine(34) in tRNA + (2E)-thiogeraniol + phosphate + diphosphate. The catalysed reaction is 5-methylaminomethyl-2-thiouridine(34) in tRNA + (2E)-geranyl diphosphate = 5-methylaminomethyl-S-(2E)-geranyl-thiouridine(34) in tRNA + diphosphate. It catalyses the reaction 5-methylaminomethyl-S-(2E)-geranyl-thiouridine(34) in tRNA + selenophosphate + H(+) = 5-methylaminomethyl-2-(Se-phospho)selenouridine(34) in tRNA + (2E)-thiogeraniol. It carries out the reaction 5-methylaminomethyl-2-(Se-phospho)selenouridine(34) in tRNA + H2O = 5-methylaminomethyl-2-selenouridine(34) in tRNA + phosphate. Functionally, involved in the post-transcriptional modification of the uridine at the wobble position (U34) of tRNA(Lys), tRNA(Glu) and tRNA(Gln). Catalyzes the conversion of 2-thiouridine (S2U-RNA) to 2-selenouridine (Se2U-RNA). Acts in a two-step process involving geranylation of 2-thiouridine (S2U) to S-geranyl-2-thiouridine (geS2U) and subsequent selenation of the latter derivative to 2-selenouridine (Se2U) in the tRNA chain. The chain is tRNA 2-selenouridine synthase from Escherichia coli O17:K52:H18 (strain UMN026 / ExPEC).